The sequence spans 418 residues: MHPRRPDGFDGLGYRGGARDEQGFGGAFPARSFSTGSDLGHWVTTPPDIPGSRNLHWGEKSPPYGVPTTSTPYEGPTEEPFSSGGGGSVQGQSSEQLNRFAGFGIGLASLFTENVLAHPCIVLRRQCQVNYHAQHYHLTPFTVINIMYSFNKTQGPRALWKGMGSTFIVQGVTLGAEGIISEFTPLPREVLHKWSPKQIGEHLLLKSLTYVVAMPFYSASLIETVQSEIIRDNTGILECVKEGIGRVIGMGVPHSKRLLPLLSLIFPTVLHGVLHYIISSVIQKFVLLILKRKTYNSHLAESTSPVQSMLDAYFPELIANFAASLCSDVILYPLETVLHRLHIQGTRTIIDNTDLGYEVLPINTQYEGMRDCINTIRQEEGVFGFYKGFGAVIIQYTLHAAVLQITKIIYSTLLQNNI.

Residues 1-30 (MHPRRPDGFDGLGYRGGARDEQGFGGAFPA) form a disordered region. Position 32 is a phosphoserine (Ser32). Positions 44-93 (TTPPDIPGSRNLHWGEKSPPYGVPTTSTPYEGPTEEPFSSGGGGSVQGQS) are disordered. Thr45 bears the Phosphothreonine mark. Residues 96 to 187 (QLNRFAGFGI…GIISEFTPLP (92 aa)) form a Solcar 1 repeat. 6 helical membrane passes run 103-123 (FGIG…CIVL), 167-187 (FIVQ…TPLP), 202-222 (HLLL…ASLI), 258-278 (LLPL…HYII), 314-334 (FPEL…LYPL), and 382-402 (VFGF…HAAV). The Solcar 2 repeat unit spans residues 311–413 (DAYFPELIAN…QITKIIYSTL (103 aa)).

This sequence belongs to the mitochondrial carrier (TC 2.A.29) family. As to quaternary structure, associates with the mitochondrial contact site and cristae organizing system (MICOS) complex. May associate with the endoplasmic reticulum membrane protein complex (EMC).

Its subcellular location is the mitochondrion outer membrane. Transmembrane protein of the mitochondrial outer membrane that controls mitochondrial organization. May regulate the assembly of the MICOS (mitochondrial contact site and cristae organizing system) complex which is essential to the biogenesis and dynamics of mitochondrial cristae, the inwards folds of the inner mitochondrial membrane. Through its interaction with the EMC (endoplasmic reticulum membrane protein complex), could regulate mitochondrial lipid homeostasis and thereby mitochondrial fission. The polypeptide is Mitochondrial outer membrane protein SLC25A46 (Homo sapiens (Human)).